We begin with the raw amino-acid sequence, 507 residues long: Hippocampus abundant transcript-like protein 1 (507 aa).

The disordered stretch occupies residues 1-22; it reads MSTDGESPEEPGWKAVASPKAS. At 1–51 the chain is on the extracellular side; the sequence is MSTDGESPEEPGWKAVASPKASAMPEKRGSAQAASSSWLQGFGQPSVYHAA. Residues 52-72 form a helical membrane-spanning segment; it reads FVIFFEFFAWGLLTTPMLTVL. Residues 73–84 are Cytoplasmic-facing; the sequence is HETFPQHTFLMN. The helical transmembrane segment at 85–105 threads the bilayer; that stretch reads GLIQGVKGLLSFLSAPLIGAL. Over 106–113 the chain is Extracellular; that stretch reads SDVWGRKP. A helical transmembrane segment spans residues 114–134; that stretch reads FLLGTVFFTCFPIPLMRISPW. Over 135–136 the chain is Cytoplasmic; that stretch reads WY. Residues 137–157 traverse the membrane as a helical segment; that stretch reads FGMISVSGVFSVTFSVIFAYV. The Extracellular segment spans residues 158–170; sequence ADFTQEHERSTAY. The chain crosses the membrane as a helical span at residues 171 to 191; sequence GWVSATFAASLVSSPAIGTYL. Topologically, residues 192 to 198 are cytoplasmic; that stretch reads SSNYGDS. Residues 199–219 form a helical membrane-spanning segment; it reads LVVLVATVVALLDICFILVAV. Topologically, residues 220-257 are extracellular; that stretch reads PESLPEKIRPASWGAQISWKQADPFASLKKVGKDSTVL. Residues 258–278 form a helical membrane-spanning segment; sequence LICITVFLSYLPEAGQYSSFF. At 279–283 the chain is on the cytoplasmic side; it reads LYLRQ. The helical transmembrane segment at 284 to 304 threads the bilayer; sequence VIGFGSVKIVAFIAMVGILSI. Topologically, residues 305–323 are extracellular; the sequence is LAQTVFLSKLMRSLGNKNT. A helical membrane pass occupies residues 324–344; sequence VLLGLGFQILQLAWYGFGAQA. The Cytoplasmic portion of the chain corresponds to 345–347; that stretch reads WMM. A helical membrane pass occupies residues 348-368; sequence WAAGTVAAMSSITFPAVSALI. The Extracellular segment spans residues 369-389; it reads SRNAESDQQGVAQGIITGIRG. Residues 390–410 traverse the membrane as a helical segment; sequence LCNGLGPALYGFIFYLFHVEL. Residues 411 to 430 are Cytoplasmic-facing; it reads NELGPKLDSDNDPLQGAFIP. The helical transmembrane segment at 431-451 threads the bilayer; sequence GPPFLFGACIVLMSFLVALFI. The Extracellular portion of the chain corresponds to 452–507; the sequence is PEYRKTGGVQKHNNSISGSLSTPPERGSDEDIEPLLQDSNIWELSSEEPGNQCTEL. The span at 462–473 shows a compositional bias: polar residues; it reads KHNNSISGSLST. Residues 462–483 are disordered; sequence KHNNSISGSLSTPPERGSDEDI. Asn464 carries N-linked (GlcNAc...) asparagine glycosylation.

Belongs to the major facilitator superfamily.

The protein resides in the membrane. In Rattus norvegicus (Rat), this protein is Hippocampus abundant transcript-like protein 1.